The sequence spans 232 residues: Orotidine 5'-phosphate decarboxylase (232 aa).

Substrate contacts are provided by residues aspartate 14, lysine 36, 63 to 72 (DLKFHDIPNT), threonine 122, arginine 183, glutamine 192, glycine 212, and arginine 213. Residue lysine 65 is the Proton donor of the active site.

This sequence belongs to the OMP decarboxylase family. Type 1 subfamily. As to quaternary structure, homodimer.

It catalyses the reaction orotidine 5'-phosphate + H(+) = UMP + CO2. It functions in the pathway pyrimidine metabolism; UMP biosynthesis via de novo pathway; UMP from orotate: step 2/2. Functionally, catalyzes the decarboxylation of orotidine 5'-monophosphate (OMP) to uridine 5'-monophosphate (UMP). This chain is Orotidine 5'-phosphate decarboxylase, found in Psychrobacter arcticus (strain DSM 17307 / VKM B-2377 / 273-4).